Reading from the N-terminus, the 321-residue chain is N-acetyl-gamma-glutamyl-phosphate reductase (321 aa).

Cysteine 131 is an active-site residue.

Belongs to the NAGSA dehydrogenase family. Type 1 subfamily.

It is found in the cytoplasm. It carries out the reaction N-acetyl-L-glutamate 5-semialdehyde + phosphate + NADP(+) = N-acetyl-L-glutamyl 5-phosphate + NADPH + H(+). It functions in the pathway amino-acid biosynthesis; L-arginine biosynthesis; N(2)-acetyl-L-ornithine from L-glutamate: step 3/4. Functionally, catalyzes the NADPH-dependent reduction of N-acetyl-5-glutamyl phosphate to yield N-acetyl-L-glutamate 5-semialdehyde. This is N-acetyl-gamma-glutamyl-phosphate reductase from Christiangramia forsetii (strain DSM 17595 / CGMCC 1.15422 / KT0803) (Gramella forsetii).